The sequence spans 375 residues: Coproporphyrin III ferrochelatase (375 aa).

Fe-coproporphyrin III-binding residues include serine 59 and tyrosine 128. Histidine 191 and glutamate 286 together coordinate Fe(2+).

It belongs to the ferrochelatase family.

It is found in the cytoplasm. The enzyme catalyses Fe-coproporphyrin III + 2 H(+) = coproporphyrin III + Fe(2+). It functions in the pathway porphyrin-containing compound metabolism; protoheme biosynthesis. Involved in coproporphyrin-dependent heme b biosynthesis. Catalyzes the insertion of ferrous iron into coproporphyrin III to form Fe-coproporphyrin III. This is Coproporphyrin III ferrochelatase from Streptomyces coelicolor (strain ATCC BAA-471 / A3(2) / M145).